Reading from the N-terminus, the 1189-residue chain is Origin recognition complex subunit 1 (1189 aa).

The required for peripherial nuclear localization stretch occupies residues 1–53 (MTPKKKIFQNFQANDNEILSPTKKGIKLNVSKLNILNFENTIITKEKTNYEYK). A Phosphothreonine modification is found at Thr-2. Ser-20 is modified (phosphoserine). Leucine heptad repeat repeat units lie at residues 137-143 (LTNISSS), 144-150 (LTNISSS), 151-157 (LTNISSS), and 158-164 (LSNSLDE). The segment covering 239–248 (KKNISKKNTH) has biased composition (basic residues). 2 disordered regions span residues 239–421 (KKNI…DHTD) and 679–749 (DTQA…QSSL). Positions 254–279 (QNDKNKEKNKEKDKNIKKDRDKDIQT) are enriched in basic and acidic residues. A compositionally biased stretch (low complexity) spans 304–320 (NNDNVKNNLKNNINNNN). Positions 321–339 (TLKRSSQSVRIDSDLSSAH) are enriched in polar residues. A compositionally biased stretch (low complexity) spans 353–381 (HRNNNNNNNNNNKTTSNNHNKNNKINNNN). The segment covering 385 to 394 (NYKKQTDTKH) has biased composition (basic and acidic residues). The span at 395 to 411 (TNNTQNNKYNKTKTTNT) shows a compositional bias: low complexity. A compositionally biased stretch (polar residues) spans 695–709 (KAQTTTNVKANTHTK). Composition is skewed to basic and acidic residues over residues 710–724 (TLND…KNKE) and 733–742 (DVKKKSDPHN). Residues Val-780 and 815–823 (GMPGTGKTA) each bind ATP. Residues Asp-903 and Glu-904 each contribute to the Mg(2+) site. ATP is bound at residue Glu-904. Positions 913–922 (QKVLFTLFDW) match the PIP-box motif. Asn-937 and Arg-1003 together coordinate ATP.

The protein belongs to the ORC1 family. As to quaternary structure, component of the origin recognition complex (ORC). Interacts (via PIP-box) with PCNA1; the interaction occurs during DNA replication in trophozoites. Post-translationally, in schizonts, may be phosphorylated by PK5; phosphorylation leads to ORC1 dissociation from the telomeres and var gene promoters, translocation to the cytoplasm, where it is degraded by the proteasome.

Its subcellular location is the nucleus. The protein localises to the chromosome. It is found in the telomere. It localises to the nucleolus. The catalysed reaction is ATP + H2O = ADP + phosphate + H(+). Functionally, component of the origin recognition complex (ORC) that binds origins of replication and thus may regulate the initiation of DNA replication. DNA-binding may not be ATP-dependent. In a SIR2A/Sir2-dependent manner, binds to and silences telomers and subtelomeric repeat regions (TAREs). In a SIR2A/Sir2-dependent manner, binds to promoters of var genes localized next to TAREs resulting in their silencing. The polypeptide is Origin recognition complex subunit 1 (Plasmodium falciparum (isolate 3D7)).